The chain runs to 320 residues: MKFGKDFRSHLEETLPAWRDKYLAYKSLKKLIKNLPPDGDPPPVAAAAEVPAGDGDGDGGIALGNWFARVLDMELQKLNDFYIEREEWYVIRLQVLKERIERVKAKKNGAFTSKSEFTEEMLEIRKAFVIIHGEMILLQTYSSLNFAGLVKILKKYDKRTGGLLSLPFTQRARHQPFFTTEPLTRLVRECEANLELLFPIEAEVLESASSSAKLQPQNDDAASHDPASSVDVETSDVYRSTLAAMKAIQGLRKASSTYNPLSLARFFHGEDGEACSGAITSESDSYSDSQIEDAEDDDKEVQSREQNTAQNAAEGQPRDE.

Residues 1–170 form the SPX domain; that stretch reads MKFGKDFRSH…GGLLSLPFTQ (170 aa). Disordered regions lie at residues 209–233 and 275–320; these read SSSAKLQPQNDDAASHDPASSVDVE and CSGA…PRDE. Residues 278 to 289 show a composition bias toward polar residues; the sequence is AITSESDSYSDS. Acidic residues predominate over residues 290 to 299; it reads QIEDAEDDDK. The segment covering 304-313 has biased composition (polar residues); it reads REQNTAQNAA.

As to quaternary structure, homodimer. Interacts (via N-terminus) with PHR2 (via C-terminus) in the presence of inositol polyphosphate. Interacts with BHLH6. Degraded under Pi starvation conditions through the ubiquitin/26S proteasome pathway. Widely expressed. Detected in root cells, with the exception of epidermis, and in mesophyll and vascular bundles in leaves.

It is found in the membrane. The protein localises to the nucleus. Its subcellular location is the cytoplasm. Its function is as follows. Inositol polyphosphate sensor that associates with transcription factors to regulate Pi starvation responses. The SPX domain provides a basic binding surface for inositol polyphosphate signaling molecules. Interacts with PHR2 to inhibit its translocation to the nucleus and repress its DNA-binding activity, and then negatively regulate Pi signaling. This is SPX domain-containing protein 4 from Oryza sativa subsp. japonica (Rice).